Reading from the N-terminus, the 219-residue chain is Transcription factor MYB23 (219 aa).

HTH myb-type domains are found at residues 9–61 (EHEY…MNYL) and 62–116 (SPNV…SKKL). 2 DNA-binding regions (H-T-H motif) span residues 37-61 (WNRI…MNYL) and 89-112 (WSLI…NTHL).

As to quaternary structure, interacts with BHLH2/EGL3/MYC146, BHLH12/MYC1 and GL3. Expressed in roots, seed coats, leaves, stems and flowers. Detected specifically in trichomes, and in the cell division and differentiation zone of the root.

Its subcellular location is the nucleus. Functionally, transcription activator, when associated with BHLH2/EGL3/MYC146 or BHLH12/MYC1. Regulates the epidermal cell fate specification. Mediates the formation of columellae and accumulation of mucilages on seed coats. Controls the elongation of epidermal cells positively in roots but negatively in stems, leading to the promotion of primary roots elongation and repression of leaves and stems elongation, respectively. Ovoids ectopic root-hair formation, probably by inducing GL2 in roots. Controls trichome initiation and branching. The protein is Transcription factor MYB23 (MYB23) of Arabidopsis thaliana (Mouse-ear cress).